Here is a 419-residue protein sequence, read N- to C-terminus: Serine hydroxymethyltransferase (419 aa).

Residues leucine 119 and 123 to 125 (GHL) contribute to the (6S)-5,6,7,8-tetrahydrofolate site. Lysine 228 carries the post-translational modification N6-(pyridoxal phosphate)lysine.

This sequence belongs to the SHMT family. In terms of assembly, homodimer. The cofactor is pyridoxal 5'-phosphate.

Its subcellular location is the cytoplasm. It carries out the reaction (6R)-5,10-methylene-5,6,7,8-tetrahydrofolate + glycine + H2O = (6S)-5,6,7,8-tetrahydrofolate + L-serine. Its pathway is one-carbon metabolism; tetrahydrofolate interconversion. It functions in the pathway amino-acid biosynthesis; glycine biosynthesis; glycine from L-serine: step 1/1. Functionally, catalyzes the reversible interconversion of serine and glycine with tetrahydrofolate (THF) serving as the one-carbon carrier. This reaction serves as the major source of one-carbon groups required for the biosynthesis of purines, thymidylate, methionine, and other important biomolecules. Also exhibits THF-independent aldolase activity toward beta-hydroxyamino acids, producing glycine and aldehydes, via a retro-aldol mechanism. The chain is Serine hydroxymethyltransferase from Desulfosudis oleivorans (strain DSM 6200 / JCM 39069 / Hxd3) (Desulfococcus oleovorans).